Consider the following 738-residue polypeptide: MSEEHPPIAEANSQPSNGCPVAGGRLNYPVEGGNANREWWPTQLNLQILKKNPPAANPLGEDFDYAKAVQTIDVDQLKADVAKVLTDSQDWWPADFGNYGPMFIRMAWHAAGTYRVGDGRGGAGAGMQRFAPLNSWPDNVLLDRARRLLWPVKKKYGNKLSWADLIVFAGNHAMDTMGFKTFGFAFGREDRWEPEQDVYWGPEHTWLGDERYTGDRDLENPLAAVQMGLIYVNPEGPNGNPDPLAAAIDIRETFGRMAMNDEETAALIVGGHTFGKTHGAGDAGLVGPDPEAAPLEQMGIGWKSAFGSGKGNDAIGSGLEVIWTHTPTKWDNSFLEILYGNEWELTKSPAGAHQWKPKDGGWANSVPMAQGTGKTHPSMLTTDLSMRFDPIYGQITKRWLDHPEELADAYAKAWYKLIHRDLGPLSRYLGPLVPKETLPWQDVIPVSETNVGADDVAELKKQVLASGLTVPQLVSTAWKAAASYRNSDKRGGANGGRIRLQPQAGWESNEPDELAQVIRILEGVQESFNAGDKKISFADLVVLGGAAAVEKAARDAGFDITVPFTPGRGDATQEQTDVESFSYLEPTADGFRNYLGKGAQIPAEYKLIDRANLLALSPPELAVLVGGLRVLGANYQGSELGVLTDRPGTLTNDFFVNLVDMGTEWTPSPADDGTYVGTDRATGASKWTASRVDLVFGANSELRALAEVYAQDDAQEKFAKDFVAAWVKVSDADRFDVR.

Residues 1–24 are disordered; that stretch reads MSEEHPPIAEANSQPSNGCPVAGG. The tryptophyl-tyrosyl-methioninium (Trp-Tyr) (with M-257) cross-link spans 108 to 231; sequence WHAAGTYRVG…LAAVQMGLIY (124 aa). Histidine 109 functions as the Proton acceptor in the catalytic mechanism. The tryptophyl-tyrosyl-methioninium (Tyr-Met) (with W-108) cross-link spans 231–257; the sequence is YVNPEGPNGNPDPLAAAIDIRETFGRM. Histidine 272 serves as a coordination point for heme b.

It belongs to the peroxidase family. Peroxidase/catalase subfamily. Homodimer or homotetramer. Requires heme b as cofactor. In terms of processing, formation of the three residue Trp-Tyr-Met cross-link is important for the catalase, but not the peroxidase activity of the enzyme.

The enzyme catalyses H2O2 + AH2 = A + 2 H2O. It catalyses the reaction 2 H2O2 = O2 + 2 H2O. Its function is as follows. Bifunctional enzyme with both catalase and broad-spectrum peroxidase activity. This is Catalase-peroxidase from Mycobacteroides abscessus (strain ATCC 19977 / DSM 44196 / CCUG 20993 / CIP 104536 / JCM 13569 / NCTC 13031 / TMC 1543 / L948) (Mycobacterium abscessus).